The sequence spans 555 residues: Dihydroxy-acid dehydratase (555 aa).

Position 78 (aspartate 78) interacts with Mg(2+). Residue cysteine 119 coordinates [2Fe-2S] cluster. Mg(2+)-binding residues include aspartate 120 and lysine 121. An N6-carboxylysine modification is found at lysine 121. [2Fe-2S] cluster is bound at residue cysteine 195. Residue glutamate 444 coordinates Mg(2+). The active-site Proton acceptor is the serine 470.

The protein belongs to the IlvD/Edd family. In terms of assembly, homodimer. [2Fe-2S] cluster serves as cofactor. Requires Mg(2+) as cofactor.

It catalyses the reaction (2R)-2,3-dihydroxy-3-methylbutanoate = 3-methyl-2-oxobutanoate + H2O. The catalysed reaction is (2R,3R)-2,3-dihydroxy-3-methylpentanoate = (S)-3-methyl-2-oxopentanoate + H2O. It participates in amino-acid biosynthesis; L-isoleucine biosynthesis; L-isoleucine from 2-oxobutanoate: step 3/4. The protein operates within amino-acid biosynthesis; L-valine biosynthesis; L-valine from pyruvate: step 3/4. Functions in the biosynthesis of branched-chain amino acids. Catalyzes the dehydration of (2R,3R)-2,3-dihydroxy-3-methylpentanoate (2,3-dihydroxy-3-methylvalerate) into 2-oxo-3-methylpentanoate (2-oxo-3-methylvalerate) and of (2R)-2,3-dihydroxy-3-methylbutanoate (2,3-dihydroxyisovalerate) into 2-oxo-3-methylbutanoate (2-oxoisovalerate), the penultimate precursor to L-isoleucine and L-valine, respectively. This is Dihydroxy-acid dehydratase from Dehalococcoides mccartyi (strain ATCC BAA-2266 / KCTC 15142 / 195) (Dehalococcoides ethenogenes (strain 195)).